A 483-amino-acid polypeptide reads, in one-letter code: Probable 4-hydroxyphenylacetate 3-monooxygenase (483 aa).

Substrate contacts are provided by residues 104 to 108 and His-150; that span reads RSPDY. Residues 150 to 152, 156 to 159, and Thr-193 each bind FAD; these read HTF and QVNR. 206–207 provides a ligand contact to substrate; that stretch reads AP. 452–455 is a binding site for FAD; that stretch reads DPIR.

This sequence belongs to the FADH(2)-utilizing monooxygenase family.

The enzyme catalyses 4-hydroxyphenylacetate + FADH2 + O2 = 3,4-dihydroxyphenylacetate + FAD + H2O + H(+). It participates in aromatic compound metabolism; 4-hydroxyphenylacetate degradation; pyruvate and succinate semialdehyde from 4-hydroxyphenylacetate: step 1/7. In terms of biological role, catalyzes the hydroxylation of 4-hydroxyphenylacetic acid (4HPA), leading to the production of 3,4-dihydroxyphenylacetic acid (DHPA). In Bacillus subtilis (strain 168), this protein is Probable 4-hydroxyphenylacetate 3-monooxygenase (yoaI).